Here is a 522-residue protein sequence, read N- to C-terminus: WEB family protein At2g38370 (522 aa).

The tract at residues 1-32 (MAEFPEPGTVNPDSDLSNGRAEKPEIDTSAPF) is disordered. 2 coiled-coil regions span residues 77 to 264 (ELQR…AARE) and 299 to 376 (ARSA…RSEN). Disordered stretches follow at residues 374–397 (SENGQRRRLSSSVNNTSKFKSRRE) and 458–493 (MSLGQMLAKNSSSDKTVSKRSEGKENEKRTKTRKRK). Positions 473 to 486 (TVSKRSEGKENEKR) are enriched in basic and acidic residues.

This sequence belongs to the WEB family.

In Arabidopsis thaliana (Mouse-ear cress), this protein is WEB family protein At2g38370.